A 218-amino-acid polypeptide reads, in one-letter code: MNKAQLVEAIADKLGGRQQAADAVDAVLDALVRAVVAGDRVSVTGFGSFEKVDRPARYARNPQTGERVRVKKTSVPRFRAGQGFKDLVSGSKKLPKNDIAVKKAPKGSLSGPPPTISKAAGKKAAAKKATGAAKKTTGAAKKTSAAAKKTTAKKTTGAAKTTAKKTTAKKSAAKTTTAAAKKTAAKKAPAKKATAKKAPAKKSTARKTTAKKATARKK.

The tract at residues 1–91 (MNKAQLVEAI…QGFKDLVSGS (91 aa)) is bacterial histone-like domain. The tract at residues 101-218 (VKKAPKGSLS…TAKKATARKK (118 aa)) is disordered. A degenerate repeats region region spans residues 118 to 218 (KAAGKKAAAK…TAKKATARKK (101 aa)). Residues 127–161 (KKATGAAKKTTGAAKKTSAAAKKTTAKKTTGAAKT) show a composition bias toward low complexity. Positions 162-172 (TAKKTTAKKSA) are enriched in basic residues. Residues 173 to 182 (AKTTTAAAKK) show a composition bias toward low complexity. Positions 183-218 (TAAKKAPAKKATAKKAPAKKSTARKTTAKKATARKK) are enriched in basic residues.

The protein belongs to the bacterial histone-like protein family. Long actinobacterial subfamily. In terms of assembly, homodimer.

Its subcellular location is the cytoplasm. The protein localises to the nucleoid. Functionally, histone-like DNA-binding protein which is capable of wrapping DNA to stabilize it, and thus to prevent its denaturation under extreme environmental conditions. The protein is DNA-binding protein HU 2 (hup2) of Streptomyces coelicolor (strain ATCC BAA-471 / A3(2) / M145).